The sequence spans 604 residues: Glutamine--fructose-6-phosphate aminotransferase [isomerizing] (604 aa).

Cys2 serves as the catalytic Nucleophile; for GATase activity. Residues 2–219 (CGIMGAVSER…EGDSACVTTQ (218 aa)) enclose the Glutamine amidotransferase type-2 domain. SIS domains are found at residues 279–427 (LRAS…DNRA) and 454–594 (LASL…VDQP). Lys599 serves as the catalytic For Fru-6P isomerization activity.

Homodimer.

It is found in the cytoplasm. The enzyme catalyses D-fructose 6-phosphate + L-glutamine = D-glucosamine 6-phosphate + L-glutamate. Catalyzes the first step in hexosamine metabolism, converting fructose-6P into glucosamine-6P using glutamine as a nitrogen source. In Legionella pneumophila (strain Lens), this protein is Glutamine--fructose-6-phosphate aminotransferase [isomerizing].